A 715-amino-acid chain; its full sequence is Phosphoribosylformylglycinamidine synthase subunit PurL (715 aa).

Residue H33 is part of the active site. Residue Y36 participates in ATP binding. Position 77 (E77) interacts with Mg(2+). Substrate contacts are provided by residues 78-81 and R100; that span reads SHNH. The active-site Proton acceptor is H79. D101 lines the Mg(2+) pocket. Position 225 (Q225) interacts with substrate. D253 is a binding site for Mg(2+). Substrate is bound at residue 297–299; sequence ESQ. ATP contacts are provided by N476 and G513. N514 contacts Mg(2+). S516 serves as a coordination point for substrate.

The protein belongs to the FGAMS family. In terms of assembly, monomer. Part of the FGAM synthase complex composed of 1 PurL, 1 PurQ and 2 PurS subunits.

The protein resides in the cytoplasm. It catalyses the reaction N(2)-formyl-N(1)-(5-phospho-beta-D-ribosyl)glycinamide + L-glutamine + ATP + H2O = 2-formamido-N(1)-(5-O-phospho-beta-D-ribosyl)acetamidine + L-glutamate + ADP + phosphate + H(+). It functions in the pathway purine metabolism; IMP biosynthesis via de novo pathway; 5-amino-1-(5-phospho-D-ribosyl)imidazole from N(2)-formyl-N(1)-(5-phospho-D-ribosyl)glycinamide: step 1/2. In terms of biological role, part of the phosphoribosylformylglycinamidine synthase complex involved in the purines biosynthetic pathway. Catalyzes the ATP-dependent conversion of formylglycinamide ribonucleotide (FGAR) and glutamine to yield formylglycinamidine ribonucleotide (FGAM) and glutamate. The FGAM synthase complex is composed of three subunits. PurQ produces an ammonia molecule by converting glutamine to glutamate. PurL transfers the ammonia molecule to FGAR to form FGAM in an ATP-dependent manner. PurS interacts with PurQ and PurL and is thought to assist in the transfer of the ammonia molecule from PurQ to PurL. The chain is Phosphoribosylformylglycinamidine synthase subunit PurL from Methanosarcina barkeri (strain Fusaro / DSM 804).